Here is a 127-residue protein sequence, read N- to C-terminus: UPF0166 protein PYRAB06660 (127 aa).

This sequence belongs to the UPF0166 family.

This Pyrococcus abyssi (strain GE5 / Orsay) protein is UPF0166 protein PYRAB06660.